Here is a 422-residue protein sequence, read N- to C-terminus: UDP-N-acetylglucosamine 1-carboxyvinyltransferase (422 aa).

22–23 (KN) contacts phosphoenolpyruvate. Arg93 provides a ligand contact to UDP-N-acetyl-alpha-D-glucosamine. Cys117 serves as the catalytic Proton donor. Cys117 is subject to 2-(S-cysteinyl)pyruvic acid O-phosphothioketal. UDP-N-acetyl-alpha-D-glucosamine is bound by residues 122–126 (RPVDL), Asp308, and Leu330.

Belongs to the EPSP synthase family. MurA subfamily.

The protein resides in the cytoplasm. It carries out the reaction phosphoenolpyruvate + UDP-N-acetyl-alpha-D-glucosamine = UDP-N-acetyl-3-O-(1-carboxyvinyl)-alpha-D-glucosamine + phosphate. The protein operates within cell wall biogenesis; peptidoglycan biosynthesis. Its function is as follows. Cell wall formation. Adds enolpyruvyl to UDP-N-acetylglucosamine. This is UDP-N-acetylglucosamine 1-carboxyvinyltransferase from Helicobacter pylori (strain Shi470).